Consider the following 707-residue polypeptide: Toxin RTX-I translocation ATP-binding protein (707 aa).

Residues Met-1 to Val-125 enclose the Peptidase C39 domain. His-83 is a catalytic residue. The ABC transmembrane type-1 domain occupies Phe-154–Gln-436. The next 5 membrane-spanning stretches (helical) occupy residues Leu-158–Val-178, Phe-188–Leu-208, Leu-295–Leu-315, Val-387–Ile-407, and Leu-410–Leu-430. Positions Ile-468–Gln-703 constitute an ABC transporter domain. ATP is bound at residue Gly-502–Ser-509.

Belongs to the ABC transporter superfamily. Protein-1 exporter (TC 3.A.1.109) family. Homodimer.

It is found in the cell membrane. Functionally, involved in the transport of the toxin RTX-I as well as that of RTX-II. This is Toxin RTX-I translocation ATP-binding protein (apxIB) from Actinobacillus pleuropneumoniae (Haemophilus pleuropneumoniae).